The primary structure comprises 503 residues: MAADQGTFTTSVTLSPVEGSRTGGILPRRAFRRSCDRCHAQKIKCTGNKEVTARAPCQRCQQAGLRCVYSERCPKRKLRPSRAADLVSADPDPCLHMSSPPVPSQSLPLDVSESHSSNTSRQFLDPPDSYDWSWTSIGTDEAIDTDCWGLSQCDGGFSCQLEPTLPDLPSPFESTVEKAPLPPVSSDIARAASAQRELFDDLSAVSQELEAILLAVTVEWPKQEIWTRASPHSPTAFPERITQRRHNMWANWLTDLHVFSLDPIGMFFNASRRLLTVLRQQAHADCHQGTLDECLRTKNLFTAVHCYILNVRILTSISELLLSQIRRTQNSHMNPWEGSRSESPSRDDTSSTSGHSSVDTIPDFSEDLPIGELFSYVDPLTHALFSACTTLHVGVQLLRENEITLGVHSAQGIAASISMSGGPGEDIARTGATNSARCEEQPTTPAARVLFMFLSDEGASQEVKSAGSRGRTIAALRRCYEDIFSLARKHKYGMLRDLNNIPP.

Residues 1–14 (MAADQGTFTTSVTL) show a composition bias toward polar residues. The segment at 1–21 (MAADQGTFTTSVTLSPVEGSR) is disordered. Positions 35–67 (CDRCHAQKIKCTGNKEVTARAPCQRCQQAGLRC) form a DNA-binding region, zn(2)-C6 fungal-type. Disordered regions lie at residues 89-124 (ADPDPCLHMSSPPVPSQSLPLDVSESHSSNTSRQFL) and 331-362 (SHMNPWEGSRSESPSRDDTSSTSGHSSVDTIP). The span at 339 to 349 (SRSESPSRDDT) shows a compositional bias: basic and acidic residues. Residues 350–359 (SSTSGHSSVD) are compositionally biased toward polar residues.

Its subcellular location is the nucleus. Its function is as follows. Transcription factor that regulates the expression of the he gene cluster that mediates the biosynthesis of lovastatin (also known as mevinolin, mevacor or monacolin K), a hypolipidemic inhibitor of (3S)-hydroxymethylglutaryl-coenzyme A (HMG-CoA) reductase (HMGR). This Aspergillus terreus (strain NIH 2624 / FGSC A1156) protein is Transcriptional regulator LovE.